Here is a 344-residue protein sequence, read N- to C-terminus: Phenylalanine--tRNA ligase alpha subunit (344 aa).

E269 provides a ligand contact to Mg(2+).

Belongs to the class-II aminoacyl-tRNA synthetase family. Phe-tRNA synthetase alpha subunit type 1 subfamily. In terms of assembly, tetramer of two alpha and two beta subunits. The cofactor is Mg(2+).

The protein localises to the cytoplasm. It carries out the reaction tRNA(Phe) + L-phenylalanine + ATP = L-phenylalanyl-tRNA(Phe) + AMP + diphosphate + H(+). The sequence is that of Phenylalanine--tRNA ligase alpha subunit from Ralstonia nicotianae (strain ATCC BAA-1114 / GMI1000) (Ralstonia solanacearum).